The primary structure comprises 466 residues: ATP synthase subunit beta (466 aa).

Residue 148–155 (GGAGVGKT) coordinates ATP.

The protein belongs to the ATPase alpha/beta chains family. In terms of assembly, F-type ATPases have 2 components, CF(1) - the catalytic core - and CF(0) - the membrane proton channel. CF(1) has five subunits: alpha(3), beta(3), gamma(1), delta(1), epsilon(1). CF(0) has three main subunits: a(1), b(2) and c(9-12). The alpha and beta chains form an alternating ring which encloses part of the gamma chain. CF(1) is attached to CF(0) by a central stalk formed by the gamma and epsilon chains, while a peripheral stalk is formed by the delta and b chains.

It localises to the cell inner membrane. It catalyses the reaction ATP + H2O + 4 H(+)(in) = ADP + phosphate + 5 H(+)(out). In terms of biological role, produces ATP from ADP in the presence of a proton gradient across the membrane. The catalytic sites are hosted primarily by the beta subunits. The sequence is that of ATP synthase subunit beta from Xylella fastidiosa (strain M12).